A 339-amino-acid polypeptide reads, in one-letter code: 2-deoxy-scyllo-inosamine dehydrogenase (339 aa).

Residues cysteine 37, histidine 59, cysteine 88, cysteine 91, cysteine 94, cysteine 102, and glutamate 143 each coordinate Zn(2+).

This sequence belongs to the zinc-containing alcohol dehydrogenase family. DOIA dehydrogenase subfamily. It depends on Zn(2+) as a cofactor.

The catalysed reaction is 2-deoxy-scyllo-inosamine + NADP(+) = 3-amino-2,3-dideoxy-scyllo-inosose + NADPH + H(+). It carries out the reaction 2-deoxy-scyllo-inosamine + NAD(+) = 3-amino-2,3-dideoxy-scyllo-inosose + NADH + H(+). It participates in metabolic intermediate biosynthesis; 2-deoxystreptamine biosynthesis; 2-deoxystreptamine from D-glucose 6-phosphate: step 3/4. Its pathway is antibiotic biosynthesis; tobramycin biosynthesis. Functionally, catalyzes the oxidation of 2-deoxy-scyllo-inosamine (DOIA) with NAD(+) or NADP(+), forming 3-amino-2,3-dideoxy-scyllo-inosose (amino-DOI). The chain is 2-deoxy-scyllo-inosamine dehydrogenase (tobE) from Streptoalloteichus tenebrarius (strain ATCC 17920 / DSM 40477 / JCM 4838 / CBS 697.72 / NBRC 16177 / NCIMB 11028 / NRRL B-12390 / A12253. 1 / ISP 5477) (Streptomyces tenebrarius).